Reading from the N-terminus, the 150-residue chain is Meiotic expression up-regulated protein 15 (150 aa).

This chain is Meiotic expression up-regulated protein 15 (meu15), found in Schizosaccharomyces pombe (strain 972 / ATCC 24843) (Fission yeast).